We begin with the raw amino-acid sequence, 830 residues long: G-type lectin S-receptor-like serine/threonine-protein kinase SD1-13 (830 aa).

An N-terminal signal peptide occupies residues 1-21; it reads MGCLLILLLTLICFSLRLCLA. The Bulb-type lectin domain occupies 22-145; sequence TDVITFSSEF…TNTGDEILWE (124 aa). The Extracellular portion of the chain corresponds to 22–434; sequence TDVITFSSEF…SEFKKRTNRS (413 aa). N-linked (GlcNAc...) asparagine glycosylation is found at Asn-40, Asn-53, and Asn-82. An EGF-like; atypical domain is found at 283–321; the sequence is PSTKCDTYATCGQFASCRFNPGSTPPCMCIRGFKPQSYA. 2 disulfide bridges follow: Cys-287-Cys-299 and Cys-293-Cys-309. 3 N-linked (GlcNAc...) asparagine glycosylation sites follow: Asn-327, Asn-384, and Asn-432. One can recognise a PAN domain in the interval 340–423; that stretch reads CESRDNNDGS…TGVVFYIRLA (84 aa). 2 disulfides stabilise this stretch: Cys-377-Cys-398 and Cys-381-Cys-387. Residues 435-455 traverse the membrane as a helical segment; that stretch reads IVITVTLLVGAFLFAGTVVLA. The Cytoplasmic segment spans residues 456-830; that stretch reads LWKIAKHREK…NVSLTKITGR (375 aa). In terms of domain architecture, Protein kinase spans 512 to 798; sequence FSITNKLGQG…NLPEPKQPAF (287 aa). ATP is bound by residues 518–526 and Lys-540; that span reads LGQGGFGAV. A Phosphothreonine modification is found at Thr-545. A phosphoserine mark is found at Ser-546 and Ser-561. The tract at residues 601-618 is caM-binding; it reads VKQRLLDWKTRFNIIDGI. Catalysis depends on Asp-637, which acts as the Proton acceptor. A phosphoserine mark is found at Ser-641, Ser-654, and Ser-670. Phosphothreonine is present on Thr-671. Phosphoserine occurs at positions 714, 715, 726, 805, 809, 810, 813, 818, and 823. Residues 789 to 830 form a disordered region; it reads NLPEPKQPAFIPRRGTSEVESSGQSDPRASINNVSLTKITGR. Residues 806-830 show a composition bias toward polar residues; the sequence is EVESSGQSDPRASINNVSLTKITGR. Thr-825 and Thr-828 each carry phosphothreonine.

This sequence belongs to the protein kinase superfamily. Ser/Thr protein kinase family. In terms of assembly, interacts with PUB9, PUB13 and PUB14. Binds to calmodulin (CaM) in a Ca(2+)-dependent manner. Post-translationally, autophosphorylated. Mostly expressed in rosette leaves, and, to a lower extent, in cauline leaves and stems.

It is found in the cell membrane. It catalyses the reaction L-seryl-[protein] + ATP = O-phospho-L-seryl-[protein] + ADP + H(+). The catalysed reaction is L-threonyl-[protein] + ATP = O-phospho-L-threonyl-[protein] + ADP + H(+). In terms of biological role, receptor-like serine/threonine-protein kinase that represses the disease resistance signaling pathway triggered in response to bacterial pathogen such as Pseudomonas syringae pv. tomato. The sequence is that of G-type lectin S-receptor-like serine/threonine-protein kinase SD1-13 (SD113) from Arabidopsis thaliana (Mouse-ear cress).